The primary structure comprises 156 residues: Lipoprotein signal peptidase (156 aa).

3 helical membrane passes run 5–25, 64–84, and 89–109; these read FKFI…DQWV, YLHL…KTLL, and IAFG…FIYG. Active-site residues include aspartate 113 and aspartate 130. Residues 122–142 traverse the membrane as a helical segment; sequence NFAIFNVADVMINISVALILI.

Belongs to the peptidase A8 family.

The protein resides in the cell inner membrane. It carries out the reaction Release of signal peptides from bacterial membrane prolipoproteins. Hydrolyzes -Xaa-Yaa-Zaa-|-(S,diacylglyceryl)Cys-, in which Xaa is hydrophobic (preferably Leu), and Yaa (Ala or Ser) and Zaa (Gly or Ala) have small, neutral side chains.. The protein operates within protein modification; lipoprotein biosynthesis (signal peptide cleavage). Functionally, this protein specifically catalyzes the removal of signal peptides from prolipoproteins. The polypeptide is Lipoprotein signal peptidase (Campylobacter jejuni subsp. doylei (strain ATCC BAA-1458 / RM4099 / 269.97)).